We begin with the raw amino-acid sequence, 153 residues long: Putative pre-16S rRNA nuclease (153 aa).

This sequence belongs to the YqgF nuclease family.

The protein resides in the cytoplasm. In terms of biological role, could be a nuclease involved in processing of the 5'-end of pre-16S rRNA. This Chloroflexus aurantiacus (strain ATCC 29366 / DSM 635 / J-10-fl) protein is Putative pre-16S rRNA nuclease.